The chain runs to 190 residues: Protein GrpE (190 aa).

Residues 1-33 (MSEQEKDQNNAEPQVETVEEQQAAAAAEAVEPT) form a disordered region. Residues 11–32 (AEPQVETVEEQQAAAAAEAVEP) are compositionally biased toward low complexity.

Belongs to the GrpE family. As to quaternary structure, homodimer.

The protein resides in the cytoplasm. Participates actively in the response to hyperosmotic and heat shock by preventing the aggregation of stress-denatured proteins, in association with DnaK and GrpE. It is the nucleotide exchange factor for DnaK and may function as a thermosensor. Unfolded proteins bind initially to DnaJ; upon interaction with the DnaJ-bound protein, DnaK hydrolyzes its bound ATP, resulting in the formation of a stable complex. GrpE releases ADP from DnaK; ATP binding to DnaK triggers the release of the substrate protein, thus completing the reaction cycle. Several rounds of ATP-dependent interactions between DnaJ, DnaK and GrpE are required for fully efficient folding. This chain is Protein GrpE, found in Alcanivorax borkumensis (strain ATCC 700651 / DSM 11573 / NCIMB 13689 / SK2).